The chain runs to 676 residues: Palmitoyl-CoA ligase FUM16 (676 aa).

Residue 245–256 participates in AMP binding; sequence IMYTSGSTGLPN. The tract at residues 552 to 655 is AMP-binding; the sequence is KLESIYRTSQ…SGLVTPTMKL (104 aa).

It belongs to the ATP-dependent AMP-binding enzyme family.

Its subcellular location is the endoplasmic reticulum. Its pathway is mycotoxin biosynthesis. In terms of biological role, palmitoyl-CoA ligase; part of the gene cluster that mediates the biosynthesis of fumonisins B1 (FB1), B2 (FB2), B3 (FB3), and B4 (FB4), which are carcinogenic mycotoxins. Plays a role in the synthesis of ceramide and is involved in self-protection from fumonisin B1 toxicity. The biosynthesis starts with the FUM1-catalyzed carbon chain assembly from one molecule of acetyl-CoA, eight molecules of malonyl-CoA, and two molecules of methionine (in S-adenosyl form). The C18 polyketide chain is released from the enzyme by a nucleophilic attack of a carbanion, which is derived from R-carbon of alanine by decarboxylation, on the carbonyl carbon of polyketide acyl chain. This step is catalyzed by the pyridoxal 5'-phosphate-dependent aminoacyl transferase FUM8. The resultant 3-keto intermediate is then stereospecifically reduced to a 3-hydroxyl product by reductase FUM13. Subsequent oxidations at C-10 by the cytochrome P450 monooxygenase FUM2, C-14 and C-15 by FUM6, FUM12 or FUM15, tricarballylic esterification of the hydroxyl groups on C-14 and C-15 by acyltransferase FUM14, and C-5 hydroxylation by 2-keto-glutarate-dependent dioxygenase FUM3 furnish the biosynthesis of fumonisins. The tricarballylic moieties are most likely derived from the citric acid cycle, and their addition to the carbon backbone may involve FUM7, FUM10, FUM11 and FUM14. The protein is Palmitoyl-CoA ligase FUM16 of Gibberella moniliformis (strain M3125 / FGSC 7600) (Maize ear and stalk rot fungus).